A 624-amino-acid chain; its full sequence is Chaperone protein HtpG (624 aa).

The segment at 1–336 (MKGQETRGFQ…SNDLPLNVSR (336 aa)) is a; substrate-binding. A b region spans residues 337–552 (EILQDSSITR…NDEMSTQMAK (216 aa)). The segment at 553 to 624 (LFAAAGQAVP…IRRMNQLLVS (72 aa)) is c.

It belongs to the heat shock protein 90 family. As to quaternary structure, homodimer.

It localises to the cytoplasm. In terms of biological role, molecular chaperone. Has ATPase activity. The polypeptide is Chaperone protein HtpG (Cronobacter sakazakii (strain ATCC BAA-894) (Enterobacter sakazakii)).